A 271-amino-acid polypeptide reads, in one-letter code: Probable redox regulatory protein SCO3349 (271 aa).

Disordered stretches follow at residues 1–21 and 109–130; these read MPKTKKAKDEKSAKKDKKHIA and AEGTRNGWTSEDDEGSRQTRPF. The span at 7–21 shows a compositional bias: basic and acidic residues; that stretch reads AKDEKSAKKDKKHIA.

It belongs to the Rv0495c family.

Functionally, essential for maintaining intracellular redox homeostasis. The chain is Probable redox regulatory protein SCO3349 from Streptomyces coelicolor (strain ATCC BAA-471 / A3(2) / M145).